We begin with the raw amino-acid sequence, 84 residues long: Delta-conotoxin-like MVIA (84 aa).

An N-terminal signal peptide occupies residues 1–22 (MKLTCVMIVAVLFLTTWTFVTA). Residues 23–49 (DDSRYGLKNLFPKARHEMKNPEASKLN) constitute a propeptide that is removed on maturation. Disulfide bonds link Cys-54/Cys-69, Cys-61/Cys-73, and Cys-68/Cys-77. Pro-65 is modified (4-hydroxyproline). A Serine amide modification is found at Ser-83.

Belongs to the conotoxin O1 superfamily. In terms of tissue distribution, expressed by the venom duct.

Its subcellular location is the secreted. In terms of biological role, delta-conotoxins bind to site 6 of voltage-gated sodium channels (Nav) and inhibit the inactivation process. The chain is Delta-conotoxin-like MVIA from Conus magus (Magical cone).